Consider the following 266-residue polypeptide: NAD-capped RNA hydrolase NudC (266 aa).

Arginine 74 contributes to the substrate binding site. The Zn(2+) site is built by cysteine 103, cysteine 106, cysteine 121, and cysteine 124. Tyrosine 129 contributes to the substrate binding site. The region spanning 130–253 (PRVSPCIIVA…TIARVLIDET (124 aa)) is the Nudix hydrolase domain. Residues alanine 163, glutamate 179, and glutamate 183 each coordinate a divalent metal cation. The Nudix box signature appears at 164–185 (GFVEAGETLEQCVAREVEEETG). Substrate is bound at residue 197 to 204 (QPWAFPSN). Glutamate 224 is an a divalent metal cation binding site. Position 246 (alanine 246) interacts with substrate.

Belongs to the Nudix hydrolase family. NudC subfamily. In terms of assembly, homodimer. Mg(2+) serves as cofactor. The cofactor is Mn(2+). Requires Zn(2+) as cofactor.

It catalyses the reaction a 5'-end NAD(+)-phospho-ribonucleoside in mRNA + H2O = a 5'-end phospho-adenosine-phospho-ribonucleoside in mRNA + beta-nicotinamide D-ribonucleotide + 2 H(+). It carries out the reaction NAD(+) + H2O = beta-nicotinamide D-ribonucleotide + AMP + 2 H(+). The catalysed reaction is NADH + H2O = reduced beta-nicotinamide D-ribonucleotide + AMP + 2 H(+). Its function is as follows. mRNA decapping enzyme that specifically removes the nicotinamide adenine dinucleotide (NAD) cap from a subset of mRNAs by hydrolyzing the diphosphate linkage to produce nicotinamide mononucleotide (NMN) and 5' monophosphate mRNA. The NAD-cap is present at the 5'-end of some mRNAs and stabilizes RNA against 5'-processing. Has preference for mRNAs with a 5'-end purine. Catalyzes the hydrolysis of a broad range of dinucleotide pyrophosphates. This is NAD-capped RNA hydrolase NudC from Photobacterium profundum (strain SS9).